The primary structure comprises 745 residues: Heterogeneous nuclear ribonucleoprotein U-like protein 2 (745 aa).

The SAP domain maps to 3 to 37; the sequence is VKRLKVTELRSELQRRGLDSRGLKMDLAQRLQEAL. Disordered stretches follow at residues 44-239 and 625-664; these read DEAG…DEEE and EEAR…GQRR. Positions 73-97 are enriched in acidic residues; sequence GDEEEEDDDEEEDEEALLEDEDEEP. Basic and acidic residues predominate over residues 142 to 161; the sequence is GEEHDNGKGEEDGPEERSGD. Position 159 is a phosphoserine (S159). Phosphothreonine is present on T163. S166, S183, S186, S224, and S226 each carry phosphoserine. Residues 183–221 are compositionally biased toward basic and acidic residues; that stretch reads SEKSKPAGSDGERRGVKRQRDEKDEHGRAYYEFREEAYH. Residues 224–417 enclose the B30.2/SPRY domain; sequence SKSPPPPEEE…VELNFGQKEE (194 aa). Acidic residues predominate over residues 230–239; that stretch reads PEEEAKDEEE. Residues 625 to 637 show a composition bias toward basic and acidic residues; it reads EEARKLLPPSEKR. A compositionally biased stretch (basic residues) spans 638–652; sequence TNRRNNRNKRNRQNR. Omega-N-methylarginine occurs at positions 654, 682, 736, and 745.

In terms of assembly, binds to MLF1 and retains it in the nucleus.

The protein localises to the nucleus. The chain is Heterogeneous nuclear ribonucleoprotein U-like protein 2 (Hnrnpul2) from Mus musculus (Mouse).